Reading from the N-terminus, the 395-residue chain is Tyrosine--tRNA ligase (395 aa).

The 'HIGH' region signature appears at 42-51 (PTAPDIHLGH). Positions 226–230 (KMSKS) match the 'KMSKS' region motif. Residue Lys-229 coordinates ATP. In terms of domain architecture, S4 RNA-binding spans 334-394 (IGLATLLKEA…GKRKFARVTV (61 aa)).

Belongs to the class-I aminoacyl-tRNA synthetase family. TyrS type 2 subfamily. Homodimer.

The protein localises to the cytoplasm. The enzyme catalyses tRNA(Tyr) + L-tyrosine + ATP = L-tyrosyl-tRNA(Tyr) + AMP + diphosphate + H(+). Its function is as follows. Catalyzes the attachment of tyrosine to tRNA(Tyr) in a two-step reaction: tyrosine is first activated by ATP to form Tyr-AMP and then transferred to the acceptor end of tRNA(Tyr). This is Tyrosine--tRNA ligase from Haemophilus influenzae (strain 86-028NP).